A 444-amino-acid chain; its full sequence is Probable glycine dehydrogenase (decarboxylating) subunit 1 (444 aa).

The protein belongs to the GcvP family. N-terminal subunit subfamily. As to quaternary structure, the glycine cleavage system is composed of four proteins: P, T, L and H. In this organism, the P 'protein' is a heterodimer of two subunits.

The catalysed reaction is N(6)-[(R)-lipoyl]-L-lysyl-[glycine-cleavage complex H protein] + glycine + H(+) = N(6)-[(R)-S(8)-aminomethyldihydrolipoyl]-L-lysyl-[glycine-cleavage complex H protein] + CO2. Functionally, the glycine cleavage system catalyzes the degradation of glycine. The P protein binds the alpha-amino group of glycine through its pyridoxal phosphate cofactor; CO(2) is released and the remaining methylamine moiety is then transferred to the lipoamide cofactor of the H protein. The sequence is that of Probable glycine dehydrogenase (decarboxylating) subunit 1 from Chlorobaculum parvum (strain DSM 263 / NCIMB 8327) (Chlorobium vibrioforme subsp. thiosulfatophilum).